A 130-amino-acid polypeptide reads, in one-letter code: MSMQDPIADMLTRIRNGQAAKHVSVKMPSAKLKIAIAQMLKEEGYITDYAVADEAKPELEITLKYFQGQPVVETIQRVSRPGLRIYKGKNELPKVMGGLGVAIVSTSKGLMTDRTARQNGMGGEVICYVA.

Belongs to the universal ribosomal protein uS8 family. Part of the 30S ribosomal subunit. Contacts proteins S5 and S12.

In terms of biological role, one of the primary rRNA binding proteins, it binds directly to 16S rRNA central domain where it helps coordinate assembly of the platform of the 30S subunit. This Shewanella halifaxensis (strain HAW-EB4) protein is Small ribosomal subunit protein uS8.